The sequence spans 668 residues: Type II methyltransferase M.MwoI (668 aa).

Belongs to the N(4)/N(6)-methyltransferase family. N(4) subfamily.

The catalysed reaction is a 2'-deoxycytidine in DNA + S-adenosyl-L-methionine = an N(4)-methyl-2'-deoxycytidine in DNA + S-adenosyl-L-homocysteine + H(+). A beta subtype methylase, recognizes the double-stranded DNA sequence 5'-GCNNNNNNNGC-3', methylates C-2 on both strands, and protects the DNA from cleavage by the MwoI endonuclease. The polypeptide is Type II methyltransferase M.MwoI (Methanothermobacter wolfeii (Methanobacterium wolfei)).